Here is a 633-residue protein sequence, read N- to C-terminus: MFHGTITKELTSHEEWSHYNENIIEDQKDFVFVKYSGLHLKSMENLQTCISLRVCIFSNNFLTDIQPLQSCKKLIKLDLHGNQIKTLPDKNFWSGLKNLKLLYLHDNGFSKLKNICVLSGCVSLIGLTMFDCPVSLKKGYRHVLVNSIWPLKALDHHVISDEEIIQNWRLPERFKTFSPSLFFNLYPALIKGTTYEDEIKNIKHIISRINEILAHNSPVLIIQRWIRGFIVRKHLSPYFKHKKHYHGKMIRVLETKLICIGRSDEDKYLEDFFFIKPECNIKGKVAHWKQMRYSPADFKYSTEYGKHISCLSYELKTKYIDGKSKQPRHHIHKGQKAMKAESEDEEVDTEFRISAMKIPLYSSRSLKYGAMLKEMKWDYFPQYLQPFPATRQKPPVKRETLWKLKKRREFLATQRAGMKLHMFDDVDKYYSEQKQHEEEARKFAAMVTAQVTQERASVNIREKLNKKIYMTRKLMEKDNETIQKGLQQIWRERLAYLEKVRERKFMFLAEKKLNAADQSLVISLNNERSILLKGITQVERLKKHMSEKKAKHLDVIEKWEEQKYKQDLLMEMKKLRVEEIQKRHCEEKFVIDTLILQKGYERLEEAKAKVEYIKTFYTSKSHKRRNEAMPDHI.

3 LRR repeats span residues 51–72, 73–94, and 98–119; these read SLRV…QSCK, KLIK…NFWS, and NLKL…CVLS. Positions 132-179 constitute an LRRCT domain; sequence CPVSLKKGYRHVLVNSIWPLKALDHHVISDEEIIQNWRLPERFKTFSP. An IQ domain is found at 215 to 244; it reads HNSPVLIIQRWIRGFIVRKHLSPYFKHKKH. Residues 324-343 form a disordered region; sequence SKQPRHHIHKGQKAMKAESE. The segment covering 325–336 has biased composition (basic residues); that stretch reads KQPRHHIHKGQK. Residues 556 to 617 are a coiled coil; it reads IEKWEEQKYK…AKVEYIKTFY (62 aa).

This is Leucine-rich repeat and IQ domain-containing protein 3 (Lrriq3) from Mus musculus (Mouse).